A 1033-amino-acid chain; its full sequence is Ubiquitin carboxyl-terminal hydrolase 48 (1033 aa).

The USP domain maps to 89 to 419; sequence VGLTNLGATC…NAYMLVYRLQ (331 aa). Cysteine 98 functions as the Nucleophile in the catalytic mechanism. Catalysis depends on histidine 351, which acts as the Proton acceptor. 3 consecutive DUSP domains span residues 457–552, 567–690, and 710–823; these read QSVA…KALC, NQLN…NKEC, and MMAS…RTRA. The segment at 610–639 is disordered; sequence EQDEDAEHSNGKLNGNAPNKDEVNEEKREE. The disordered stretch occupies residues 878–920; the sequence is APELNVSSSEAEEEREENKPEGEQDPDFNQSNGGAKRQKLSHQ. One can recognise a Ubiquitin-like domain in the interval 931-1007; it reads RRSTRHRKVR…ILLKADEPIA (77 aa).

The protein belongs to the peptidase C19 family.

It is found in the cytoplasm. Its subcellular location is the nucleus. It catalyses the reaction Thiol-dependent hydrolysis of ester, thioester, amide, peptide and isopeptide bonds formed by the C-terminal Gly of ubiquitin (a 76-residue protein attached to proteins as an intracellular targeting signal).. Functionally, recognizes and hydrolyzes the peptide bond at the C-terminal Gly of ubiquitin. Involved in the processing of poly-ubiquitin precursors as well as that of ubiquitinated proteins. The chain is Ubiquitin carboxyl-terminal hydrolase 48 (USP48) from Gallus gallus (Chicken).